The sequence spans 343 residues: Adenine deaminase (343 aa).

The Zn(2+) site is built by His17, His19, and His197. The Proton donor role is filled by Glu200. Asp278 is a Zn(2+) binding site. Asp279 provides a ligand contact to substrate.

This sequence belongs to the metallo-dependent hydrolases superfamily. Adenosine and AMP deaminases family. Adenine deaminase type 2 subfamily. It depends on Zn(2+) as a cofactor.

The enzyme catalyses adenine + H2O + H(+) = hypoxanthine + NH4(+). Its function is as follows. Catalyzes the hydrolytic deamination of adenine to hypoxanthine. Plays an important role in the purine salvage pathway and in nitrogen catabolism. The chain is Adenine deaminase from Rhodopseudomonas palustris (strain BisB18).